A 349-amino-acid polypeptide reads, in one-letter code: UDP-3-O-acylglucosamine N-acyltransferase (349 aa).

His242 (proton acceptor) is an active-site residue.

Belongs to the transferase hexapeptide repeat family. LpxD subfamily. As to quaternary structure, homotrimer.

It carries out the reaction a UDP-3-O-[(3R)-3-hydroxyacyl]-alpha-D-glucosamine + a (3R)-hydroxyacyl-[ACP] = a UDP-2-N,3-O-bis[(3R)-3-hydroxyacyl]-alpha-D-glucosamine + holo-[ACP] + H(+). It participates in bacterial outer membrane biogenesis; LPS lipid A biosynthesis. In terms of biological role, catalyzes the N-acylation of UDP-3-O-acylglucosamine using 3-hydroxyacyl-ACP as the acyl donor. Is involved in the biosynthesis of lipid A, a phosphorylated glycolipid that anchors the lipopolysaccharide to the outer membrane of the cell. This chain is UDP-3-O-acylglucosamine N-acyltransferase, found in Cytophaga hutchinsonii (strain ATCC 33406 / DSM 1761 / CIP 103989 / NBRC 15051 / NCIMB 9469 / D465).